Reading from the N-terminus, the 608-residue chain is Dihydroxyacetone kinase (608 aa).

The DhaK domain occupies 8–357 (YKKDLVLSHL…LDHKTSAPGW (350 aa)). Substrate is bound by residues 53–56 (GSGH), lysine 105, and aspartate 110. Histidine 234 serves as the catalytic Tele-hemiaminal-histidine intermediate. In terms of domain architecture, DhaL spans 392-599 (KLYADLLESG…LAALISGITD (208 aa)). ATP is bound by residues 421–424 (DGDC), 467–468 (TS), 523–524 (TL), and 584–586 (DPG).

It belongs to the dihydroxyacetone kinase (DAK) family.

Its subcellular location is the cytoplasm. It catalyses the reaction dihydroxyacetone + ATP = dihydroxyacetone phosphate + ADP + H(+). The enzyme catalyses D-glyceraldehyde + ATP = D-glyceraldehyde 3-phosphate + ADP + H(+). It functions in the pathway polyol metabolism; glycerol fermentation; glycerone phosphate from glycerol (oxidative route): step 2/2. Its function is as follows. Catalyzes both the phosphorylation of dihydroxyacetone and of glyceraldehyde. This chain is Dihydroxyacetone kinase (DAK), found in Komagataella pastoris (Yeast).